An 89-amino-acid polypeptide reads, in one-letter code: Conotoxin Lt6.4 (89 aa).

Residues 1–22 form the signal peptide; sequence MKLTCVPIVAMLFLMACQLITA. The propeptide occupies 23–50; it reads DYSREKHGYSAEKSSDKIQDSFYSKLTK. Intrachain disulfides connect C52–C67, C59–C71, and C66–C80.

This sequence belongs to the conotoxin O1 superfamily. As to expression, expressed by the venom duct.

Its subcellular location is the secreted. This is Conotoxin Lt6.4 from Conus litteratus (Lettered cone).